The following is a 133-amino-acid chain: Large-conductance mechanosensitive channel (133 aa).

The next 2 helical transmembrane spans lie at 14–34 (VVDLAVGVVIGAAFGKIVSSL) and 67–87 (GNFIQTIFDFLIIAAAIFMFV).

This sequence belongs to the MscL family. In terms of assembly, homopentamer.

Its subcellular location is the cell membrane. In terms of biological role, channel that opens in response to stretch forces in the membrane lipid bilayer. May participate in the regulation of osmotic pressure changes within the cell. In Bacillus cereus (strain AH187), this protein is Large-conductance mechanosensitive channel.